A 99-amino-acid polypeptide reads, in one-letter code: Plastocyanin (99 aa).

The Plastocyanin-like domain occupies 1–99 (IEVLLGGGDG…AGMVGKVTVN (99 aa)). Cu cation is bound by residues His-37, Cys-84, His-87, and Met-92.

Belongs to the plastocyanin family. Requires Cu(2+) as cofactor.

The protein resides in the plastid. It localises to the chloroplast thylakoid membrane. In terms of biological role, participates in electron transfer between P700 and the cytochrome b6-f complex in photosystem I. This Capsella bursa-pastoris (Shepherd's purse) protein is Plastocyanin (PETE).